Reading from the N-terminus, the 291-residue chain is MSNILKFGIPKGSLEDATVDLFKQAGWQVGISSRSYFPTIDDEEMNCKLIRPQEMGKYVERGTIDVGIAGRDWVRENDSDVIEVCEMVYSKVSRRPVRWVLVVSQDSPVQKPEDLHGATISTELVGFTKRYFAERNIPVTVEFSWGATEAKVVDGLCDAIVEVTETGSTIRANNLRIVCDLMESVPVLIVNKAAWADPWKQAKIQQIATLLKSALAAEGMVGLKMNAPNSAVDAITEILPSLNNPTVSHLYNSDWVSIESILPEKEVRSIVPKLLKMGAEGIVEYPLNKII.

The protein belongs to the ATP phosphoribosyltransferase family. Long subfamily. The cofactor is Mg(2+).

The protein resides in the cytoplasm. It catalyses the reaction 1-(5-phospho-beta-D-ribosyl)-ATP + diphosphate = 5-phospho-alpha-D-ribose 1-diphosphate + ATP. It functions in the pathway amino-acid biosynthesis; L-histidine biosynthesis; L-histidine from 5-phospho-alpha-D-ribose 1-diphosphate: step 1/9. Feedback inhibited by histidine. In terms of biological role, catalyzes the condensation of ATP and 5-phosphoribose 1-diphosphate to form N'-(5'-phosphoribosyl)-ATP (PR-ATP). Has a crucial role in the pathway because the rate of histidine biosynthesis seems to be controlled primarily by regulation of HisG enzymatic activity. The chain is ATP phosphoribosyltransferase from Geotalea uraniireducens (strain Rf4) (Geobacter uraniireducens).